A 213-amino-acid polypeptide reads, in one-letter code: MEEIFKNYPLLKNQNVPRETLIEFDLFISMLQEENEKINIISKETAKNEVIRERHIVDSAQIIEFVDLNSNIITDIGSGGGMPGIIISIMIKNQKNLAKVHLYEKSHHKSSFLRKVSRDLKLNTEVMQENIFEAEKLDSGTIMARAFKPLPIILDLVYKNFNSYKNLIVFMGKNGEKVLEETLMNWDFDFEKKKSITSEDSFLLNIKKIKKKN.

S-adenosyl-L-methionine contacts are provided by residues Gly-77, Met-82, 104–106 (EKS), and Arg-145.

This sequence belongs to the methyltransferase superfamily. RNA methyltransferase RsmG family.

It localises to the cytoplasm. It carries out the reaction guanosine(527) in 16S rRNA + S-adenosyl-L-methionine = N(7)-methylguanosine(527) in 16S rRNA + S-adenosyl-L-homocysteine. Specifically methylates the N7 position of guanine in position 527 of 16S rRNA. In Pelagibacter ubique (strain HTCC1062), this protein is Ribosomal RNA small subunit methyltransferase G.